A 417-amino-acid polypeptide reads, in one-letter code: Probable metalloprotease arx1 (417 aa).

It belongs to the peptidase M24 family. As to quaternary structure, component of the nucleoplasmic and cytoplasmic pre-60S ribosomal particles.

It localises to the cytoplasm. The protein localises to the nucleus. Its function is as follows. Probable metalloprotease involved in proper assembly of pre-ribosomal particles during the biogenesis of the 60S ribosomal subunit. Accompanies the pre-60S particles to the cytoplasm. This is Probable metalloprotease arx1 (arx1) from Schizosaccharomyces pombe (strain 972 / ATCC 24843) (Fission yeast).